The chain runs to 147 residues: Large ribosomal subunit protein bL9 (147 aa).

This sequence belongs to the bacterial ribosomal protein bL9 family.

Binds to the 23S rRNA. In Caldanaerobacter subterraneus subsp. tengcongensis (strain DSM 15242 / JCM 11007 / NBRC 100824 / MB4) (Thermoanaerobacter tengcongensis), this protein is Large ribosomal subunit protein bL9.